A 192-amino-acid polypeptide reads, in one-letter code: Adenylate kinase (192 aa).

10 to 15 serves as a coordination point for ATP; sequence GAGKGT. Residues 30–59 are NMP; sequence STGDMLRAAVAQATEVGKRAKAVMDAGQLV. AMP contacts are provided by residues T31, R36, 57-59, 85-88, and Q92; these read QLV and GYPR. Residues 126-142 are LID; it reads NRVAETVAAGGTVRSDD. R127 contributes to the ATP binding site. Residues R139 and R150 each contribute to the AMP site. A178 provides a ligand contact to ATP.

This sequence belongs to the adenylate kinase family. Monomer.

It localises to the cytoplasm. It carries out the reaction AMP + ATP = 2 ADP. Its pathway is purine metabolism; AMP biosynthesis via salvage pathway; AMP from ADP: step 1/1. Functionally, catalyzes the reversible transfer of the terminal phosphate group between ATP and AMP. Plays an important role in cellular energy homeostasis and in adenine nucleotide metabolism. The polypeptide is Adenylate kinase (Sinorhizobium medicae (strain WSM419) (Ensifer medicae)).